The primary structure comprises 525 residues: Allantoate deiminase (525 aa).

Residues 1 to 53 (MAVPHPSSSSSRSHPFLSHVYHTSFHHHHHHNHPSLVLFWCLVFSLLSPLALS) form the signal peptide. Positions 56 to 75 (SSSSSSSSDSSSSSSSHISL) are enriched in low complexity. The tract at residues 56 to 78 (SSSSSSSSDSSSSSSSHISLGIG) is disordered. Residue Asn156 is glycosylated (N-linked (GlcNAc...) asparagine). Mn(2+) is bound by residues His167, Asp178, Glu215, His281, and His499.

The protein belongs to the peptidase M20A family. As to quaternary structure, homodimer. Requires Mn(2+) as cofactor. In terms of tissue distribution, expressed in seedlings, roots, stems, leaves, flowers, siliques and seeds.

The protein localises to the endoplasmic reticulum. It catalyses the reaction allantoate + H2O + 2 H(+) = (S)-2-ureidoglycine + NH4(+) + CO2. Inhibited by borate, fluoride, L-Asn and L-Asp, but not by phenylphosphorodiamidate. Involved in the catabolism of purine nucleotides. Can use allantoate as substrate, but not Nalpha-carbamoyl-L-Asp, Nalpha-carbamoyl-L-Ala or Nalpha-carbamoyl-Gly. The sequential activity of AAH, UGLYAH and UAH allows a complete purine breakdown without the intermediate generation of urea. Involved in the regulation of seed maturation and seed dormancy. The chain is Allantoate deiminase from Arabidopsis thaliana (Mouse-ear cress).